Here is a 1460-residue protein sequence, read N- to C-terminus: Nucleoporin NUP159 (1460 aa).

The tract at residues 1-500 (MSSLKDEVPT…SEQDATDPAS (500 aa)) is interaction with DBP5. The stretch at 228 to 231 (AVFG) is one FG 1 repeat. The stretch at 267–270 (PPFG) is one PXFG 1 repeat. Residues 401-435 (KSLSPTSEKIPIAGQEQEEKKKNNESSKALSENPF) form a disordered region. Phosphoserine is present on Ser-404. An SXFGXPXFG 1 repeat occupies 462 to 470 (STFGAPSFG). Residues 483–504 (STSTGVASSEQDATDPASAKPV) form a disordered region. The interval 497 to 701 (DPASAKPVFG…KPNTSTKPKT (205 aa)) is interactions with CRM1 and GLE1. The stretch at 503-511 (PVFGKPAFG) is one SXFGXPXFG 2; approximate repeat. One copy of the SXFGXPXFG 3; approximate repeat lies at 522 to 530 (YAFGKPSFG). The PXFG 2 repeat unit spans residues 532-535 (PSFG). Residues 533 to 619 (SFGSGKSSVE…SAFGTASSNE (87 aa)) form a disordered region. Composition is skewed to polar residues over residues 536-546 (SGKSSVESPAS), 556-567 (GTPSFGSGNSSV), 582-593 (GTPSFGSGNSSA), and 607-619 (FGTS…SSNE). Residues 548-556 (SAFGKPSFG) form an SXFGXPXFG 4 repeat. The stretch at 558–561 (PSFG) is one PXFG 3 repeat. Residues 574–582 (SAFGKPSFG) form an SXFGXPXFG 5 repeat. The stretch at 584–587 (PSFG) is one PXFG 4 repeat. The SXFGXPXFG 6 repeat unit spans residues 600-608 (SAFGKPSFG). The stretch at 610 to 613 (SAFG) is one SXFG 1 repeat. An SXFGXPXFG 7; approximate repeat occupies 624 to 632 (SIFGKAAFG). The FG 2 repeat unit spans residues 642 to 645 (ELFG). A disordered region spans residues 647-704 (NFTISKPTVDSPKEVDSTSPFPSSGDQSEDESKSDVDSSSTPFGTKPNTSTKPKTNAF). The residue at position 657 (Ser-657) is a Phosphoserine. Residues 683–704 (DSSSTPFGTKPNTSTKPKTNAF) are compositionally biased toward low complexity. The stretch at 687–690 (TPFG) is one FG 3 repeat. The FXFG 1 repeat unit spans residues 704 to 707 (FDFG). The stretch at 709–712 (SSFG) is one SXFG 2 repeat. A Phosphoserine modification is found at Ser-724. Polar residues-rich tracts occupy residues 727–750 (TFKF…FSSF), 757–767 (NGSLSKGSTSE), and 778–800 (NGPN…STRL). The interval 727–824 (TFKFGTQASP…EAQKSPIGKL (98 aa)) is disordered. An FXFG 2 repeat occupies 728-731 (FKFG). Residues Ser-735 and Ser-745 each carry the phosphoserine modification. Thr-803 is subject to Phosphothreonine. Positions 804 to 814 (PSDEDGEVVEE) are enriched in acidic residues. A phosphoserine mark is found at Ser-805 and Ser-819. The PXFG 5 repeat unit spans residues 842-845 (PVFG). A compositionally biased stretch (polar residues) spans 861-889 (TNITKPSSTTPAFSFGNSTMNKSNTSTVS). The disordered stretch occupies residues 861 to 1092 (TNITKPSSTT…DINTDELPHG (232 aa)). Residues 873–876 (FSFG) form an FXFG 3 repeat. Ser-889 carries the post-translational modification Phosphoserine. Residues 917 to 936 (AKEERTGESSKKDHNDDPKD) show a composition bias toward basic and acidic residues. Position 940 is a phosphoserine (Ser-940). Polar residues predominate over residues 942 to 958 (SEISVRTSESAFDTTAN). 4 stretches are compositionally biased toward basic and acidic residues: residues 960 to 1002 (EIPK…KNNE), 1017 to 1027 (ALKKDNEKENF), 1035 to 1061 (QFED…KESD), and 1068 to 1092 (SDRD…LPHG). The tract at residues 1086-1175 (TDELPHGGEA…TCNFSVQTFE (90 aa)) is interaction with DYN2. Residues 1223–1460 (AEFTVLMENI…DFFKNLNMAK (238 aa)) are interaction with NUP82. Coiled coils occupy residues 1279–1320 (EQMQ…YLFL) and 1383–1418 (AKLA…GKKA).

As to quaternary structure, component of the nuclear pore complex (NPC). NPC constitutes the exclusive means of nucleocytoplasmic transport. NPCs allow the passive diffusion of ions and small molecules and the active, nuclear transport receptor-mediated bidirectional transport of macromolecules such as proteins, RNAs, ribonucleoparticles (RNPs), and ribosomal subunits across the nuclear envelope. Due to its 8-fold rotational symmetry, all subunits are present with 8 copies or multiples thereof. Part of the NUP82 subcomplex, interacts with NUP82 through its C-terminal coiled coil. This subcomplex is the base for interactions with NUP116 and GLE2, with NUP42 and GLE1 and with DYN2. Interacts directly with DYN2. Interacts through its FG repeats with karyopherins, such as heterodimeric mRNA transport factor MEX67/MTR2, CRM1 (XPO1), and PSE1 (GSP1-GDP dependent). Interaction with CRM1 (XPO1) is GSP1-GTP dependent and stimulated by RNA1. NUP159 also interacts with GLE1 and the ATP-dependent RNA helicase DBP5.

The protein resides in the nucleus. The protein localises to the nuclear pore complex. It is found in the nucleus membrane. Functionally, functions as a component of the nuclear pore complex (NPC). NPC components, collectively referred to as nucleoporins (NUPs), can play the role of both NPC structural components and of docking or interaction partners for transiently associated nuclear transport factors. Active directional transport is assured by both, a Phe-Gly (FG) repeat affinity gradient for these transport factors across the NPC and a transport cofactor concentration gradient across the nuclear envelope (GSP1 and GSP2 GTPases associated predominantly with GTP in the nucleus, with GDP in the cytoplasm). NUP159 plays an important role in several nuclear export pathways including poly(A)+ RNA, pre-ribosome, and protein export. The chain is Nucleoporin NUP159 (NUP159) from Saccharomyces cerevisiae (strain ATCC 204508 / S288c) (Baker's yeast).